A 152-amino-acid polypeptide reads, in one-letter code: Biogenesis of lysosome-related organelles complex 1 subunit 1 (152 aa).

The protein belongs to the BLOC1S1 family. As to quaternary structure, component of the biogenesis of lysosome-related organelles complex-1 (BLOC-1). Interacts with BLOS2 and SNX1. In terms of tissue distribution, expressed in the whole plant (at protein level).

It localises to the cytoplasm. The protein localises to the endosome. In terms of biological role, component of the biogenesis of lysosome-related organelles complex-1 (BLOC-1), a complex that mediates the vacuolar degradative transport via the intracellular vesicle trafficking from the endosome to the vacuole. Probably regulates the PIN1 and PIN2 homeostasis through its interaction with SNX1. This is Biogenesis of lysosome-related organelles complex 1 subunit 1 (BLOS1) from Arabidopsis thaliana (Mouse-ear cress).